The following is a 430-amino-acid chain: Putative O-antigen transporter (430 aa).

12 consecutive transmembrane segments (helical) span residues 23 to 39, 45 to 61, 96 to 112, 131 to 147, 163 to 179, 192 to 208, 236 to 252, 266 to 282, 309 to 325, 342 to 358, 373 to 389, and 400 to 416; these read IIIAGVQLASISYLISM, YAIFSLLTGLLVWCSAV, IAIIFFIALFYIFSGVI, LFFTSCLVFSSIGIGAI, LLNALSYMIGMLGLLYI, LIVLYLPVGMISLCYIV, LFTLLSIVVLQTDYMVI, VTMKIFGLVFFIYTAIL, ILLGSLYVVGCTIFIYL, VSILSFMLIGIYFCIRV, LKILWILVPLQAIIGGI, and ISGVLLGLIISFALTVF.

The protein resides in the cell inner membrane. The protein operates within bacterial outer membrane biogenesis; LPS O-antigen biosynthesis. In terms of biological role, may be involved in the translocation process of the nascent O-polysaccharide molecules and/or its ligation to lipid A core units. The sequence is that of Putative O-antigen transporter (rfbX) from Salmonella typhimurium (strain LT2 / SGSC1412 / ATCC 700720).